The sequence spans 408 residues: S-adenosylmethionine sensor upstream of mTORC1 (408 aa).

Positions 1-16 (MEAAPRSRPRPGGAAA) are enriched in low complexity. Positions 1 to 37 (MEAAPRSRPRPGGAAASPPPPPPPPPPEQERKLEQEK) are disordered. Over residues 17–27 (SPPPPPPPPPP) the composition is skewed to pro residues. Residues 28–37 (EQERKLEQEK) show a composition bias toward basic and acidic residues. S-adenosyl-L-methionine-binding residues include Arg97, Gly175, Asp193, Asp205, Phe206, and Ser247.

The protein belongs to the BMT2/SAMTOR family. Interacts with the GATOR1 complex; interaction is disrupted when SAMTOR binds S-adenosyl-L-methionine. Interacts with the KICSTOR complex; interaction is disrupted when SAMTOR binds S-adenosyl-L-methionine.

In terms of biological role, S-adenosyl-L-methionine-binding protein that acts as an inhibitor of mTORC1 signaling via interaction with the GATOR1 and KICSTOR complexes. Acts as a sensor of S-adenosyl-L-methionine to signal methionine sufficiency to mTORC1: in presence of methionine, binds S-adenosyl-L-methionine, leading to disrupt interaction with the GATOR1 and KICSTOR complexes and promote mTORC1 signaling. Upon methionine starvation, S-adenosyl-L-methionine levels are reduced, thereby promoting the association with GATOR1 and KICSTOR, leading to inhibit mTORC1 signaling. Probably also acts as a S-adenosyl-L-methionine-dependent methyltransferase. The protein is S-adenosylmethionine sensor upstream of mTORC1 of Gallus gallus (Chicken).